The chain runs to 191 residues: Thymidylate kinase (191 aa).

7-14 (GVDGAGKS) is a binding site for ATP.

The protein belongs to the thymidylate kinase family.

The enzyme catalyses dTMP + ATP = dTDP + ADP. Phosphorylation of dTMP to form dTDP in both de novo and salvage pathways of dTTP synthesis. The protein is Thymidylate kinase of Helicobacter pylori (strain P12).